We begin with the raw amino-acid sequence, 71 residues long: Small ribosomal subunit protein bS21 (71 aa).

The segment at 47–71 (RENATRAKRHAKRVARENARNTRLY) is disordered. A compositionally biased stretch (basic and acidic residues) spans 60 to 71 (VARENARNTRLY).

The protein belongs to the bacterial ribosomal protein bS21 family.

In Actinobacillus succinogenes (strain ATCC 55618 / DSM 22257 / CCUG 43843 / 130Z), this protein is Small ribosomal subunit protein bS21.